The chain runs to 273 residues: LOB domain-containing protein 20 (273 aa).

The segment covering Met-1–Arg-15 has biased composition (basic and acidic residues). The tract at residues Met-1–Met-39 is disordered. Positions Thr-23–Met-39 are enriched in low complexity. The LOB domain occupies Ser-50 to Leu-152. Residues Leu-221 to Ala-248 are disordered.

It belongs to the LOB domain-containing protein family. Expressed in roots and flowers.

This chain is LOB domain-containing protein 20 (LBD20), found in Arabidopsis thaliana (Mouse-ear cress).